Reading from the N-terminus, the 747-residue chain is Threonine synthase-like 1 (747 aa).

N6-(pyridoxal phosphate)lysine is present on Lys351.

This sequence belongs to the threonine synthase family. The cofactor is pyridoxal 5'-phosphate.

The polypeptide is Threonine synthase-like 1 (Thnsl1) (Mus musculus (Mouse)).